The following is a 1052-amino-acid chain: CCAAT/enhancer-binding protein zeta (1052 aa).

3 disordered regions span residues 1–40 (MSAD…KNGF), 122–158 (VENK…VSKA), and 621–677 (SQLD…AEKP). The span at 23–34 (EDPDEEDEEDGD) shows a compositional bias: acidic residues. The span at 122–150 (VENKKQKATEGKKTSEKKVKNKTVAEQRP) shows a compositional bias: basic and acidic residues. A compositionally biased stretch (acidic residues) spans 627-643 (PESDEENFVDVGDDSDD). A phosphoserine mark is found at serine 629 and serine 641. A compositionally biased stretch (basic and acidic residues) spans 644–677 (EKFTDADKGTATDAVKEVESKETEPESSAEAEKP). The residue at position 837 (serine 837) is a Phosphoserine. The tract at residues 876-969 (KGAKADLEDS…QGQKKKKKSF (94 aa)) is disordered. Over residues 883-932 (EDSESSDGELGDLDDDEVSLGSMNDEDFEIDEDGGTFMDVSDDESEDAPE) the composition is skewed to acidic residues. 3 positions are modified to phosphoserine: serine 958, serine 972, and serine 977. Positions 1032–1052 (KKKKNFRKKMKAPQKPKRQRK) are disordered.

It belongs to the CBF/MAK21 family. In terms of tissue distribution, ubiquitous.

It localises to the nucleus. Its function is as follows. Stimulates transcription from the HSP70 promoter. This chain is CCAAT/enhancer-binding protein zeta (Cebpz), found in Mus musculus (Mouse).